The sequence spans 359 residues: Protein Wnt-5a (359 aa).

Positions 1-20 are cleaved as a signal peptide; sequence MASRYLTLAAALLASFLQVD. An intrachain disulfide couples Cys83 to Cys94. Asn93 and Asn99 each carry an N-linked (GlcNAc...) asparagine glycan. 10 disulfides stabilise this stretch: Cys133-Cys141, Cys143-Cys161, Cys217-Cys231, Cys219-Cys226, Cys288-Cys319, Cys304-Cys314, Cys318-Cys358, Cys334-Cys349, Cys336-Cys346, and Cys341-Cys342. Ser223 is lipidated: O-palmitoleoyl serine; by PORCN. 2 N-linked (GlcNAc...) asparagine glycosylation sites follow: Asn291 and Asn305.

It belongs to the Wnt family. Post-translationally, palmitoleoylation is required for efficient binding to frizzled receptors. Depalmitoleoylation leads to Wnt signaling pathway inhibition.

It is found in the secreted. It localises to the extracellular space. Its subcellular location is the extracellular matrix. Its function is as follows. Ligand for members of the frizzled family of seven transmembrane receptors. Can activate or inhibit canonical Wnt signaling, depending on receptor context. Required during embryogenesis for extension of the primary anterior-posterior axis. This is Protein Wnt-5a (WNT5A) from Pleurodeles waltl (Iberian ribbed newt).